Reading from the N-terminus, the 177-residue chain is Protein Flattop (177 aa).

A disordered region spans residues 113-177 (ILGKPHDPDS…TPGPQRPAKS (65 aa)). A compositionally biased stretch (basic and acidic residues) spans 115 to 124 (GKPHDPDSQK). The segment covering 132-163 (TKTVQQARSPTIIPSSPAANLNSPDELQSSHP) has biased composition (polar residues).

It belongs to the Flattop family. As to quaternary structure, microtubule inner protein component of sperm flagellar doublet microtubules. Interacts with DLG3. In terms of tissue distribution, expressed in airway epithelial cells.

Its subcellular location is the cytoplasm. It localises to the cytoskeleton. It is found in the cilium basal body. The protein localises to the cell projection. The protein resides in the cilium. Its subcellular location is the apical cell membrane. It localises to the cilium axoneme. It is found in the flagellum axoneme. In terms of biological role, microtubule inner protein (MIP) part of the dynein-decorated doublet microtubules (DMTs) in cilia axoneme. Acts as a regulator of cilium basal body docking and positioning in mono- and multiciliated cells. Regulates basal body docking and cilia formation in multiciliated lung cells. Regulates kinocilium positioning and stereocilia bundle morphogenesis in the inner ear. This Homo sapiens (Human) protein is Protein Flattop.